The primary structure comprises 188 residues: CASP-like protein 4B1 (188 aa).

The span at 1 to 11 shows a compositional bias: basic and acidic residues; the sequence is MTNPDKQKPVE. Residues 1–34 form a disordered region; the sequence is MTNPDKQKPVEVTDVETAAEKTSEPTPASGTSTI. Over 1–46 the chain is Cytoplasmic; that stretch reads MTNPDKQKPVEVTDVETAAEKTSEPTPASGTSTITQRWKREDLIKK. Positions 24–34 are enriched in polar residues; the sequence is EPTPASGTSTI. The chain crosses the membrane as a helical span at residues 47–67; that stretch reads ASPITRGICLLFSLLAFLIMV. The Extracellular segment spans residues 68–84; that stretch reads SNKHGYGRNFNEYEEYR. A helical transmembrane segment spans residues 85-105; the sequence is YVLAISIISTLYTAWQTFAHF. Residues 106–120 are Cytoplasmic-facing; the sequence is SKREFFDRRTSTLVD. Residues 121 to 141 form a helical membrane-spanning segment; it reads FSGDQIVAYLLISAASSAIPL. At 142 to 156 the chain is on the extracellular side; that stretch reads TNRFREGQDNIFTDS. The helical transmembrane segment at 157–177 threads the bilayer; sequence AASAISMAIFAFVALALSALF. Over 178-188 the chain is Cytoplasmic; sequence SGYKLSTHSFI.

The protein belongs to the Casparian strip membrane proteins (CASP) family. As to quaternary structure, homodimer and heterodimers.

It localises to the cell membrane. This chain is CASP-like protein 4B1, found in Arabidopsis lyrata subsp. lyrata (Lyre-leaved rock-cress).